Here is a 461-residue protein sequence, read N- to C-terminus: MKNTSSSTTLTMNDTIAAIATPLGKGAISIIKISGHNALNILKQLTQKQDFTPRYAYVHDIFSNGVLLDKALVIYFKAPYSFTGEDVCEIQCHGSPLLAQNILQACLNLGARLAKAGEFSKKAFLNHKMDLSEIEASVQLILCEDESVLNALARQLKGELKIFIEEARGNLLKLLASSEVLIDYSEEDIPSDFLDGVSLNLEKQIASFKDLLDFSNAQKQRNKGHALSIVGKPNAGKSSLLNAMLLEERALVSDIKGTTRDTIEEVIELKGHKVRLIDTAGIRESADKIERLGIEKSLKSLENCDIILGVFDLSKPLEKEDFNLIDTLNRAKKPCIVVLNKNDLAPKLELEILKSYLKIPYTLLETNTLNSKACLKDLSQKISAFFPKLDTQNKLLLTSLAQKIALENAITELQNAKNHLETLELFSYHILSAIENLNLLTRPYETSQMLDSMFSEFCLGK.

(6S)-5-formyl-5,6,7,8-tetrahydrofolate-binding residues include lysine 32, glutamate 89, and lysine 128. The TrmE-type G domain maps to 224–387; sequence GHALSIVGKP…LSQKISAFFP (164 aa). Asparagine 234 contributes to the K(+) binding site. GTP contacts are provided by residues 234–239, 253–259, and 278–281; these read NAGKSS, SDIKGTT, and DTAG. Serine 238 contacts Mg(2+). Serine 253, isoleucine 255, and threonine 258 together coordinate K(+). A Mg(2+)-binding site is contributed by threonine 259. Lysine 461 contributes to the (6S)-5-formyl-5,6,7,8-tetrahydrofolate binding site.

The protein belongs to the TRAFAC class TrmE-Era-EngA-EngB-Septin-like GTPase superfamily. TrmE GTPase family. Homodimer. Heterotetramer of two MnmE and two MnmG subunits. Requires K(+) as cofactor.

It localises to the cytoplasm. Functionally, exhibits a very high intrinsic GTPase hydrolysis rate. Involved in the addition of a carboxymethylaminomethyl (cmnm) group at the wobble position (U34) of certain tRNAs, forming tRNA-cmnm(5)s(2)U34. The protein is tRNA modification GTPase MnmE of Helicobacter pylori (strain ATCC 700392 / 26695) (Campylobacter pylori).